The primary structure comprises 599 residues: Zinc finger BED domain-containing protein 3 (599 aa).

The disordered stretch occupies residues 70–104; the sequence is LNGGMGSPGNGPGTPLSRNNYAHHHQQHQNQQHVG. A compositionally biased stretch (gly residues) spans 72–81; sequence GGMGSPGNGP. A BED-type zinc finger spans residues 123–176; it reads VKTAKVWRYFDELPTIEQAAECRICRKKIKATNSSTTGMIRHLRSCHVQEYQLV. Residues Cys144, Cys147, His164, and His169 each coordinate Zn(2+). 2 disordered regions span residues 208-283 and 440-491; these read GIEN…QCQN and ATSS…SSID. 2 stretches are compositionally biased toward low complexity: residues 223–246 and 268–283; these read SQKS…SHFS and SNSI…QCQN. Residues 440–455 show a composition bias toward polar residues; the sequence is ATSSYEDVSVNESQMA. Residues 460–483 show a composition bias toward acidic residues; it reads GDEEEEIMEEEVEEDENVEIEDDT.

In terms of tissue distribution, expressed in neuronal cell bodies in the ventral cord and HSN neurons.

It is found in the nucleus. Functionally, probable transcription factor. Involved in vulval organogenesis. During vulval development, may play a role in the regulation of cell cycle regulators such as cul-1. Positively modulates expression of homeobox protein lin-39, perhaps by binding to regulatory regions of the lin-39 gene, acting in the vulval lineage. Plays a role in larval molting. The protein is Zinc finger BED domain-containing protein 3 of Caenorhabditis elegans.